A 738-amino-acid polypeptide reads, in one-letter code: Melanotransferrin (738 aa).

The first 19 residues, 1–19, serve as a signal peptide directing secretion; the sequence is MRLLSVTFWLLLSLRTVVC. Transferrin-like domains follow at residues 23 to 357 and 366 to 706; these read VQWC…GLLC and LRWC…GMLS. Disulfide bonds link cysteine 26/cysteine 63 and cysteine 36/cysteine 54. Fe(3+) contacts are provided by aspartate 78 and tyrosine 107. N-linked (GlcNAc...) asparagine glycosylation occurs at asparagine 118. 4 disulfides stabilise this stretch: cysteine 130–cysteine 216, cysteine 172–cysteine 189, cysteine 186–cysteine 199, and cysteine 257–cysteine 271. Threonine 132 lines the hydrogencarbonate pocket. A glycan (N-linked (GlcNAc...) asparagine) is linked at asparagine 135. Residues arginine 136, valine 138, and glycine 139 each coordinate hydrogencarbonate. Fe(3+) is bound at residue tyrosine 210. Residues histidine 279 and tyrosine 451 each contribute to the Fe(3+) site. Residue serine 462 is modified to Phosphoserine. The N-linked (GlcNAc...) asparagine glycan is linked to asparagine 515. Tyrosine 556 and histidine 625 together coordinate Fe(3+). Cysteine 709 carries the GPI-anchor amidated cysteine lipid modification. Positions 710-738 are cleaved as a propeptide — removed in mature form; the sequence is SGAGAAVQRVPLLALLLLTLAAGLLPRVL.

Belongs to the transferrin family.

The protein localises to the cell membrane. In terms of biological role, involved in iron cellular uptake. Seems to be internalized and then recycled back to the cell membrane. Binds a single atom of iron per subunit. Could also bind zinc. This chain is Melanotransferrin (Meltf), found in Mus musculus (Mouse).